The following is a 280-amino-acid chain: B3 domain-containing protein At5g25470 (280 aa).

The segment at residues 20 to 114 is a DNA-binding region (TF-B3 1); it reads WKSLSPGQNW…FLEVQIFKND (95 aa). The interval 122 to 153 is disordered; the sequence is PPEVEPETEPFHPTTPKNSHKETTTASASASA. Positions 183 to 276 form a DNA-binding region, TF-B3 2; sequence YFVKTLTKGN…ELVTAVRVHF (94 aa).

It localises to the nucleus. The sequence is that of B3 domain-containing protein At5g25470 from Arabidopsis thaliana (Mouse-ear cress).